A 598-amino-acid chain; its full sequence is Beta-galactosidase (598 aa).

The first 21 residues, 1 to 21 (MLRTTLAPLVLALALALPAAA), serve as a signal peptide directing secretion. The Proton donor role is filled by glutamate 184. The active-site Nucleophile is glutamate 260.

The protein belongs to the glycosyl hydrolase 35 family.

It carries out the reaction Hydrolysis of terminal non-reducing beta-D-galactose residues in beta-D-galactosides.. Its function is as follows. Preferentially hydrolyzes beta(1-&gt;3) galactosyl linkages over beta(1-&gt;4) linkages. The chain is Beta-galactosidase (bga) from Xanthomonas manihotis.